The primary structure comprises 587 residues: Putative inactive receptor-like protein kinase At1g64210 (587 aa).

The N-terminal stretch at Met1–Ser19 is a signal peptide. Residues Gln20 to Ala232 are Extracellular-facing. Asn37 and Asn44 each carry an N-linked (GlcNAc...) asparagine glycan. LRR repeat units follow at residues Ser89–Lys112, Ser113–Lys136, Asn137–Thr160, Ser161–Lys183, and Leu184–Phe205. N-linked (GlcNAc...) asparagine glycosylation is found at Asn149, Asn169, Asn188, and Asn214. A helical transmembrane segment spans residues Phe233 to Ile253. At Thr254 to Glu587 the chain is on the cytoplasmic side. The 275-residue stretch at Ser307–Ile581 folds into the Protein kinase domain. Position 309 is a phosphoserine (Ser309). Residues Leu313–Thr321 and Lys335 contribute to the ATP site. At Ser386 the chain carries Phosphoserine. Phosphothreonine occurs at positions 462, 463, 466, and 477.

The protein resides in the cell membrane. This chain is Putative inactive receptor-like protein kinase At1g64210, found in Arabidopsis thaliana (Mouse-ear cress).